Here is a 213-residue protein sequence, read N- to C-terminus: GTP cyclohydrolase 1 (213 aa).

Residues 1-27 (MDDVVKSLLQRTTSSLTKPAPARPSRE) form a disordered region. Residues Cys-100, His-103, and Cys-172 each coordinate Zn(2+).

The protein belongs to the GTP cyclohydrolase I family. As to quaternary structure, homomer.

The catalysed reaction is GTP + H2O = 7,8-dihydroneopterin 3'-triphosphate + formate + H(+). Its pathway is cofactor biosynthesis; 7,8-dihydroneopterin triphosphate biosynthesis; 7,8-dihydroneopterin triphosphate from GTP: step 1/1. This is GTP cyclohydrolase 1 from Beijerinckia indica subsp. indica (strain ATCC 9039 / DSM 1715 / NCIMB 8712).